Consider the following 371-residue polypeptide: Geranylgeranyl transferase type-2 subunit alpha (371 aa).

5 PFTA repeats span residues Y45 to S79, I92 to K126, N131 to L165, I177 to N211, and L242 to F276.

Belongs to the protein prenyltransferase subunit alpha family. As to quaternary structure, heterodimer of an alpha and a beta subunit.

It catalyses the reaction geranylgeranyl diphosphate + L-cysteinyl-[protein] = S-geranylgeranyl-L-cysteinyl-[protein] + diphosphate. Catalyzes the transfer of a geranyl-geranyl moiety from geranyl-geranyl pyrophosphate to proteins having the C-terminal -XCC or -XCXC, where both cysteines may become modified. Acts on YPT1 and SEC4. The polypeptide is Geranylgeranyl transferase type-2 subunit alpha (BET4) (Candida albicans (Yeast)).